We begin with the raw amino-acid sequence, 434 residues long: ATP-dependent protease ATPase subunit HslU (434 aa).

Residues Ile-18, 60-65 (GVGKTE), Asp-247, Glu-312, and Arg-384 each bind ATP.

The protein belongs to the ClpX chaperone family. HslU subfamily. In terms of assembly, a double ring-shaped homohexamer of HslV is capped on each side by a ring-shaped HslU homohexamer. The assembly of the HslU/HslV complex is dependent on binding of ATP.

Its subcellular location is the cytoplasm. Its function is as follows. ATPase subunit of a proteasome-like degradation complex; this subunit has chaperone activity. The binding of ATP and its subsequent hydrolysis by HslU are essential for unfolding of protein substrates subsequently hydrolyzed by HslV. HslU recognizes the N-terminal part of its protein substrates and unfolds these before they are guided to HslV for hydrolysis. This chain is ATP-dependent protease ATPase subunit HslU, found in Brucella anthropi (strain ATCC 49188 / DSM 6882 / CCUG 24695 / JCM 21032 / LMG 3331 / NBRC 15819 / NCTC 12168 / Alc 37) (Ochrobactrum anthropi).